The chain runs to 471 residues: Citrate synthase, mitochondrial (471 aa).

Residues 1–18 (MASLRSATALSRLRSRAG) constitute a mitochondrion transit peptide. Residues histidine 307, histidine 353, and aspartate 408 contribute to the active site.

The protein belongs to the citrate synthase family. As to quaternary structure, homodimer.

It is found in the mitochondrion matrix. The catalysed reaction is oxaloacetate + acetyl-CoA + H2O = citrate + CoA + H(+). It functions in the pathway carbohydrate metabolism; tricarboxylic acid cycle; isocitrate from oxaloacetate: step 1/2. This is Citrate synthase, mitochondrial (CIT) from Citrus maxima (Pomelo).